The chain runs to 923 residues: Protocadherin gamma-B4 (923 aa).

An N-terminal signal peptide occupies residues 1-30; sequence MGSGAGELGRAERLPVLFLFLLSLFCPALC. Cadherin domains are found at residues 31 to 133, 134 to 242, 243 to 345, 346 to 450, 451 to 560, and 568 to 673; these read EQIR…TPKF, TQNS…APVF, SQDI…APEV, IFQS…APVF, SQSS…APRV, and DGSA…LPDI. At 31–689 the chain is on the extracellular side; that stretch reads EQIRYRIPEE…SDLEAELQFY (659 aa). N417 and N543 each carry an N-linked (GlcNAc...) asparagine glycan. Residues 690–710 form a helical membrane-spanning segment; it reads LVVALALISVLFLVAMILAIA. Topologically, residues 711–923 are cytoplasmic; sequence LRLRRSSSPA…KKKSGKKEKK (213 aa). Disordered regions lie at residues 797–832 and 893–923; these read SHQQ…WPNN and ATLT…KEKK. Residues 913-923 are compositionally biased toward basic residues; that stretch reads NKKKSGKKEKK.

The protein localises to the cell membrane. Its function is as follows. Potential calcium-dependent cell-adhesion protein. May be involved in the establishment and maintenance of specific neuronal connections in the brain. The polypeptide is Protocadherin gamma-B4 (PCDHGB4) (Pan troglodytes (Chimpanzee)).